Consider the following 327-residue polypeptide: Probable cell division protein WhiA (327 aa).

Residues 275-308 constitute a DNA-binding region (H-T-H motif); it reads SLEELGRLADPPMTKDAVAGRIRRLLSMADRKAK. Residues 304 to 327 are disordered; the sequence is DRKAKQDGIPDTESAVTPDLLEDA.

This sequence belongs to the WhiA family.

Functionally, involved in cell division and chromosome segregation. This Mycobacterium sp. (strain MCS) protein is Probable cell division protein WhiA.